Here is a 194-residue protein sequence, read N- to C-terminus: Protein GrpE (194 aa).

It belongs to the GrpE family. As to quaternary structure, homodimer.

It is found in the cytoplasm. In terms of biological role, participates actively in the response to hyperosmotic and heat shock by preventing the aggregation of stress-denatured proteins, in association with DnaK and GrpE. It is the nucleotide exchange factor for DnaK and may function as a thermosensor. Unfolded proteins bind initially to DnaJ; upon interaction with the DnaJ-bound protein, DnaK hydrolyzes its bound ATP, resulting in the formation of a stable complex. GrpE releases ADP from DnaK; ATP binding to DnaK triggers the release of the substrate protein, thus completing the reaction cycle. Several rounds of ATP-dependent interactions between DnaJ, DnaK and GrpE are required for fully efficient folding. The protein is Protein GrpE of Aliivibrio fischeri (strain MJ11) (Vibrio fischeri).